The sequence spans 514 residues: Voltage-gated potassium channel regulatory subunit KCNG1 (514 aa).

The Cytoplasmic portion of the chain corresponds to 1 to 224; it reads MTLLPGDNSH…DMVERPHSGL (224 aa). Residues 180–196 are compositionally biased toward acidic residues; the sequence is MEREEEEEPLDSEDQES. The tract at residues 180–205 is disordered; the sequence is MEREEEEEPLDSEDQESEGPSASEGR. The helical transmembrane segment at 225 to 246 threads the bilayer; that stretch reads PGKVFACLSVLFVTVTAVNLSV. Topologically, residues 247-267 are extracellular; sequence STLPSLREEEEQGQCSQMCHN. Residues 268–289 traverse the membrane as a helical segment; the sequence is VFIVESVCVGWFSLEFLLRFIQ. At 290 to 300 the chain is on the cytoplasmic side; that stretch reads APSKFAFLRSP. The helical transmembrane segment at 301–321 threads the bilayer; it reads LTLIDLVAILPYYVTLLVDGA. The Extracellular portion of the chain corresponds to 322 to 338; it reads ASSRRKPSTGNSYLDKV. The chain crosses the membrane as a helical; Voltage-sensor span at residues 339 to 359; that stretch reads GLVLRVLRALRILYVMRLARH. Residues 360–374 are Cytoplasmic-facing; the sequence is SLGLQTLGLTARRCT. Residues 375–396 traverse the membrane as a helical segment; sequence REFGLLLLFLCVAIALFAPLLY. The Extracellular portion of the chain corresponds to 397-411; that stretch reads VIENEMADSPEFTSI. The segment at residues 412-423 is an intramembrane region (helical); that stretch reads PACYWWAVITMT. The short motif at 424-429 is the Selectivity filter element; it reads TVGYGD. The stretch at 424–431 is an intramembrane region; sequence TVGYGDMV. The Extracellular segment spans residues 432–438; it reads PRSTPGQ. A helical transmembrane segment spans residues 439-467; the sequence is VVALSSILSGILLMAFPVTSIFHTFSRSY. The Cytoplasmic portion of the chain corresponds to 468 to 514; the sequence is LELKQEQERVLIRRAQYLIKTKSQLSGMSQDSDILFGSASSDTRDNN.

The protein belongs to the potassium channel family. G (TC 1.A.1.2) subfamily. Kv6.1/KCNG1 sub-subfamily. As to quaternary structure, heterotetramer with KCNB1 or KCNB2.

It localises to the cell membrane. Functionally, regulatory alpha-subunit of the voltage-gated potassium (Kv) channel which, when coassembled with KCNB1 or KCNB2, can modulate their expression and their gating kinetics by acting on deactivation upon repolarization and inactivation during maintained depolarization. Potassium channel subunit that does not form functional channels by itself. In Mus musculus (Mouse), this protein is Voltage-gated potassium channel regulatory subunit KCNG1.